Here is a 252-residue protein sequence, read N- to C-terminus: Type III pantothenate kinase (252 aa).

6-13 (DMGNTRLK) is a binding site for ATP. Substrate contacts are provided by residues Tyr-93 and 100-103 (GVDR). Catalysis depends on Asp-102, which acts as the Proton acceptor. Position 126 (Thr-126) interacts with ATP. Thr-179 is a substrate binding site.

Belongs to the type III pantothenate kinase family. In terms of assembly, homodimer. The cofactor is NH4(+). Requires K(+) as cofactor.

The protein resides in the cytoplasm. The enzyme catalyses (R)-pantothenate + ATP = (R)-4'-phosphopantothenate + ADP + H(+). It participates in cofactor biosynthesis; coenzyme A biosynthesis; CoA from (R)-pantothenate: step 1/5. Functionally, catalyzes the phosphorylation of pantothenate (Pan), the first step in CoA biosynthesis. This is Type III pantothenate kinase from Cellvibrio japonicus (strain Ueda107) (Pseudomonas fluorescens subsp. cellulosa).